Here is a 492-residue protein sequence, read N- to C-terminus: Fascin-2 (492 aa).

This sequence belongs to the fascin family. As to expression, exclusively expressed in the eye, specifically in photoreceptor cells.

The protein resides in the cytoplasm. Its subcellular location is the cytoskeleton. The protein localises to the cell projection. It localises to the stereocilium. Its function is as follows. Acts as an actin bundling protein. May play a pivotal role in photoreceptor cell-specific events, such as disk morphogenesis. The protein is Fascin-2 (FSCN2) of Bos taurus (Bovine).